We begin with the raw amino-acid sequence, 70 residues long: DNA gyrase inhibitor YacG (70 aa).

Zn(2+) contacts are provided by cysteine 9, cysteine 12, cysteine 28, and cysteine 32. A disordered region spans residues 44 to 70 (SRKIPGSSIDPESIVTTNNKQDNVDEQ).

The protein belongs to the DNA gyrase inhibitor YacG family. In terms of assembly, interacts with GyrB. It depends on Zn(2+) as a cofactor.

Its function is as follows. Inhibits all the catalytic activities of DNA gyrase by preventing its interaction with DNA. Acts by binding directly to the C-terminal domain of GyrB, which probably disrupts DNA binding by the gyrase. This Legionella pneumophila subsp. pneumophila (strain Philadelphia 1 / ATCC 33152 / DSM 7513) protein is DNA gyrase inhibitor YacG.